Reading from the N-terminus, the 179-residue chain is ATP synthase subunit delta (179 aa).

Belongs to the ATPase delta chain family. F-type ATPases have 2 components, F(1) - the catalytic core - and F(0) - the membrane proton channel. F(1) has five subunits: alpha(3), beta(3), gamma(1), delta(1), epsilon(1). F(0) has three main subunits: a(1), b(2) and c(10-14). The alpha and beta chains form an alternating ring which encloses part of the gamma chain. F(1) is attached to F(0) by a central stalk formed by the gamma and epsilon chains, while a peripheral stalk is formed by the delta and b chains.

It is found in the cell membrane. Functionally, f(1)F(0) ATP synthase produces ATP from ADP in the presence of a proton or sodium gradient. F-type ATPases consist of two structural domains, F(1) containing the extramembraneous catalytic core and F(0) containing the membrane proton channel, linked together by a central stalk and a peripheral stalk. During catalysis, ATP synthesis in the catalytic domain of F(1) is coupled via a rotary mechanism of the central stalk subunits to proton translocation. Its function is as follows. This protein is part of the stalk that links CF(0) to CF(1). It either transmits conformational changes from CF(0) to CF(1) or is implicated in proton conduction. This Rubrobacter xylanophilus (strain DSM 9941 / JCM 11954 / NBRC 16129 / PRD-1) protein is ATP synthase subunit delta.